Here is a 458-residue protein sequence, read N- to C-terminus: Divalent metal cation transporter MntH (458 aa).

11 helical membrane passes run G38–M58, L86–L106, G119–I139, I151–M171, A180–A200, M223–H243, L275–G295, I315–S335, G370–V390, I395–F415, and W436–L456.

It belongs to the NRAMP family.

It localises to the cell membrane. In terms of biological role, h(+)-stimulated, divalent metal cation uptake system. In Latilactobacillus sakei subsp. sakei (strain 23K) (Lactobacillus sakei subsp. sakei), this protein is Divalent metal cation transporter MntH.